The primary structure comprises 662 residues: 72 kDa type IV collagenase (662 aa).

An N-terminal signal peptide occupies residues 1–29 (MEALGARGALAGFLRALCVLGCLLGRATA). Positions 30–109 (PPSPVIKFPG…PRCGNPDVAN (80 aa)) are cleaved as a propeptide — activation peptide. The short motif at 100-107 (PRCGNPDV) is the Cysteine switch element. Cys-102 is a Zn(2+) binding site. Residues 110–221 (YNFFPRKPKW…LWTLGEGQVV (112 aa)) form a collagenase-like 1 region. Positions 134 and 168 each coordinate Ca(2+). Zn(2+) is bound by residues His-178 and Asp-180. Ca(2+) is bound by residues Asp-185 and Gly-186. His-193 contacts Zn(2+). Residues Gly-200, Gly-202, and Asp-204 each coordinate Ca(2+). Position 206 (His-206) interacts with Zn(2+). Residues Asp-208, Asp-209, and Glu-211 each contribute to the Ca(2+) site. The segment at 222-396 (RVKYGNADGE…WGFCPDQGYS (175 aa)) is collagen-binding. Fibronectin type-II domains follow at residues 228 to 276 (ADGE…FCPH), 286 to 334 (ADGQ…FCPE), and 344 to 392 (SEGA…FCPD). Disulfide bonds link Cys-233–Cys-259, Cys-247–Cys-274, Cys-291–Cys-317, Cys-305–Cys-332, Cys-349–Cys-375, and Cys-363–Cys-390. Positions 397–467 (LFLVAAHEFG…GPTPTLGPVT (71 aa)) are collagenase-like 2. Zn(2+) is bound at residue His-403. Glu-404 is a catalytic residue. Zn(2+) contacts are provided by His-407 and His-413. Residues 414-662 (SQDPGALMAP…GSIKTDWLGC (249 aa)) form a required for inhibitor TIMP2 binding region. Cys-471 and Cys-662 are joined by a disulfide. 4 Hemopexin repeats span residues 474 to 518 (DIVF…WPEL), 519 to 565 (PEKI…GLPP), 567 to 615 (VQRV…WNAI), and 616 to 662 (PDHL…WLGC). Asp-478, Asp-523, and Asp-571 together coordinate Ca(2+). N-linked (GlcNAc...) asparagine glycosylation occurs at Asn-575. Asp-620 provides a ligand contact to Ca(2+). Asn-644 carries an N-linked (GlcNAc...) asparagine glycan.

Belongs to the peptidase M10A family. In terms of assembly, interacts (via the C-terminal hemopexin-like domains-containing region) with the integrin alpha-V/beta-3; the interaction promotes vascular invasion in angiogenic vessels and melamoma cells. Interacts (via the C-terminal PEX domain) with TIMP2 (via the C-terminal); the interaction inhibits the degradation activity. Interacts with GSK3B. The cofactor is Ca(2+). Requires Zn(2+) as cofactor. Post-translationally, phosphorylation on multiple sites modulates enzymatic activity. Phosphorylated by PKC in vitro. In terms of processing, the propeptide is processed by MMP14 (MT-MMP1) and MMP16 (MT-MMP3). Autocatalytic cleavage in the C-terminal produces the anti-angiogenic peptide, PEX. This processing appears to be facilitated by binding integrinv/beta3.

The protein localises to the secreted. It localises to the extracellular space. It is found in the extracellular matrix. The protein resides in the membrane. Its subcellular location is the nucleus. It carries out the reaction Cleavage of gelatin type I and collagen types IV, V, VII, X. Cleaves the collagen-like sequence Pro-Gln-Gly-|-Ile-Ala-Gly-Gln.. Ubiquitinous metalloproteinase that is involved in diverse functions such as remodeling of the vasculature, angiogenesis, tissue repair, tumor invasion, inflammation, and atherosclerotic plaque rupture. As well as degrading extracellular matrix proteins, can also act on several nonmatrix proteins such as big endothelial 1 and beta-type CGRP promoting vasoconstriction. Also cleaves KISS at a Gly-|-Leu bond. Appears to have a role in myocardial cell death pathways. Contributes to myocardial oxidative stress by regulating the activity of GSK3beta. Cleaves GSK3beta in vitro. Involved in the formation of the fibrovascular tissues. Functionally, PEX, the C-terminal non-catalytic fragment of MMP2, possesses anti-angiogenic and anti-tumor properties and inhibits cell migration and cell adhesion to FGF2 and vitronectin. Ligand for integrin alpha-v/beta-3 on the surface of blood vessels. This chain is 72 kDa type IV collagenase (MMP2), found in Oryctolagus cuniculus (Rabbit).